The primary structure comprises 743 residues: 1,4-alpha-glucan branching enzyme GlgB (743 aa).

Catalysis depends on aspartate 416, which acts as the Nucleophile. Glutamate 469 functions as the Proton donor in the catalytic mechanism.

This sequence belongs to the glycosyl hydrolase 13 family. GlgB subfamily. Monomer.

The enzyme catalyses Transfers a segment of a (1-&gt;4)-alpha-D-glucan chain to a primary hydroxy group in a similar glucan chain.. It participates in glycan biosynthesis; glycogen biosynthesis. Functionally, catalyzes the formation of the alpha-1,6-glucosidic linkages in glycogen by scission of a 1,4-alpha-linked oligosaccharide from growing alpha-1,4-glucan chains and the subsequent attachment of the oligosaccharide to the alpha-1,6 position. The sequence is that of 1,4-alpha-glucan branching enzyme GlgB from Shewanella baltica (strain OS185).